The sequence spans 87 residues: Large ribosomal subunit protein bL27 (87 aa).

This sequence belongs to the bacterial ribosomal protein bL27 family.

The sequence is that of Large ribosomal subunit protein bL27 from Renibacterium salmoninarum (strain ATCC 33209 / DSM 20767 / JCM 11484 / NBRC 15589 / NCIMB 2235).